The primary structure comprises 33 residues: Dermaseptin-4 (33 aa).

Residue L33 is modified to Leucine amide.

As to expression, expressed by the skin glands.

The protein resides in the secreted. Its function is as follows. Has antiparasitic activity against trypomastigote form of T.cruzi (IC(50)=0.25 uM) in vitro but not against L.infantum. Probably acts by permeabilizing cell membranes. In vitro, shows no cytotoxicity against macrophages. Has antibacterial activity. The sequence is that of Dermaseptin-4 from Pithecopus nordestinus (Northeastern Brazilian leaf frog).